A 196-amino-acid polypeptide reads, in one-letter code: ATP-dependent Clp protease proteolytic subunit (196 aa).

The active-site Nucleophile is Ser98. Residue His123 is part of the active site.

Belongs to the peptidase S14 family. In terms of assembly, fourteen ClpP subunits assemble into 2 heptameric rings which stack back to back to give a disk-like structure with a central cavity, resembling the structure of eukaryotic proteasomes.

It localises to the cytoplasm. It catalyses the reaction Hydrolysis of proteins to small peptides in the presence of ATP and magnesium. alpha-casein is the usual test substrate. In the absence of ATP, only oligopeptides shorter than five residues are hydrolyzed (such as succinyl-Leu-Tyr-|-NHMec, and Leu-Tyr-Leu-|-Tyr-Trp, in which cleavage of the -Tyr-|-Leu- and -Tyr-|-Trp bonds also occurs).. Its function is as follows. Cleaves peptides in various proteins in a process that requires ATP hydrolysis. Has a chymotrypsin-like activity. Plays a major role in the degradation of misfolded proteins. The chain is ATP-dependent Clp protease proteolytic subunit from Limosilactobacillus fermentum (strain NBRC 3956 / LMG 18251) (Lactobacillus fermentum).